A 611-amino-acid chain; its full sequence is MILMSGQMEQYLFHRGEFRQAYEYFGAHPTRSSTIFRIWAPSAKSVAVVGDFNDWRAREEDYCHKLTNEGIWEVEIKKIKKGNLYKYQIETSWGEKILKSDPYAFYSELRPQTASIVNGKPKFRWADKRWLNNREIGYAKPINIYEVHLGSWKKKEDGTYYNYKEIAELLVEYMLEMNYTHIEIMPIIEYPFDGSWGYQGTGYYSVTSRYGTPDDFMYFVNYFHKNNLGVILDWVPGHFCKDSHGLYRFDGSACYEYEDPSLGENEWGSANFNVSRNEVRSFLLSNLYFWIKEFHIDGIRMDAVSNMLYYKDGLSENKHSVEFLQYLNQSLHEEYPDVMLIAEDSSAWPLVTKYQADGGLGFDFKWNMGWMNDTLKYMEQDPFFRKSHHGKLTFSFMYAFSENFILPLSHDEIVHGKNSILNKMPGYYEDKLAHVKNLYSYQMAHPGKKLNFMGNEFVQGLEWRYYEQLEWQLLKDNKGSQDIQKYVKALNKLYLEEEALWYDGQDGFEWIEHENINENMLIFLRKTPNMEDFIIAVFNFSGKDHEIYPLGVPLEDGEYEVILDSNEKKFGGSYQGRKRKYKSIKKSWNYREQYIEIKIAKNSAVFLKYKK.

Aspartate 302 serves as the catalytic Nucleophile. Glutamate 343 functions as the Proton donor in the catalytic mechanism.

It belongs to the glycosyl hydrolase 13 family. GlgB subfamily. Monomer.

The enzyme catalyses Transfers a segment of a (1-&gt;4)-alpha-D-glucan chain to a primary hydroxy group in a similar glucan chain.. It participates in glycan biosynthesis; glycogen biosynthesis. Its function is as follows. Catalyzes the formation of the alpha-1,6-glucosidic linkages in glycogen by scission of a 1,4-alpha-linked oligosaccharide from growing alpha-1,4-glucan chains and the subsequent attachment of the oligosaccharide to the alpha-1,6 position. In Fusobacterium nucleatum subsp. nucleatum (strain ATCC 25586 / DSM 15643 / BCRC 10681 / CIP 101130 / JCM 8532 / KCTC 2640 / LMG 13131 / VPI 4355), this protein is 1,4-alpha-glucan branching enzyme GlgB.